The sequence spans 484 residues: Glycogen synthase (484 aa).

K15 is a binding site for ADP-alpha-D-glucose.

This sequence belongs to the glycosyltransferase 1 family. Bacterial/plant glycogen synthase subfamily.

It carries out the reaction [(1-&gt;4)-alpha-D-glucosyl](n) + ADP-alpha-D-glucose = [(1-&gt;4)-alpha-D-glucosyl](n+1) + ADP + H(+). It functions in the pathway glycan biosynthesis; glycogen biosynthesis. In terms of biological role, synthesizes alpha-1,4-glucan chains using ADP-glucose. The polypeptide is Glycogen synthase (glgA) (Bacillus subtilis (strain 168)).